We begin with the raw amino-acid sequence, 217 residues long: CLA biosynthesis enone reductase (217 aa).

Positions 20, 22, and 24 each coordinate FMN. Residue Cys51 participates in 10-oxooctadecanoate binding. Residues Asn78 and Gln81 each coordinate FMN. Arg118 is a 10-oxooctadecanoate binding site. Positions 165, 168, 169, and 206 each coordinate FMN.

It belongs to the nitroreductase family. In terms of assembly, homodimer. Requires FMN as cofactor.

It carries out the reaction 10-oxo-(11E)-octadecenoate + NADH + H(+) = 10-oxooctadecanoate + NAD(+). Its pathway is lipid metabolism; fatty acid metabolism. In terms of biological role, is involved in a saturation metabolic pathway of polyunsaturated fatty acids, that detoxifies unsaturated fatty acids and generates hydroxy fatty acids, oxo fatty acids, conjugated fatty acids such as conjugated linoleic acids (CLAs), and partially saturated trans-fatty acids as intermediates. CLA-ER catalyzes the saturation of the carbon-carbon double bond in 10-oxo-(11E)-octadecenoate to produce 10-oxooctadecanoate, during linoleate metabolism. As part of the gut microbiome, this enzyme modifies host fatty acid composition and is expected to improve human health by altering lipid metabolism related to the onset of metabolic syndrome. The chain is CLA biosynthesis enone reductase from Lactiplantibacillus plantarum (Lactobacillus plantarum).